Reading from the N-terminus, the 391-residue chain is Phosphoglycerate kinase (391 aa).

Substrate-binding positions include 21–23, Arg36, 59–62, Arg113, and Arg146; these read DLN and HLGR. Residues Lys197, Glu319, and 345 to 348 contribute to the ATP site; that span reads GGDT.

This sequence belongs to the phosphoglycerate kinase family. As to quaternary structure, monomer.

It is found in the cytoplasm. It carries out the reaction (2R)-3-phosphoglycerate + ATP = (2R)-3-phospho-glyceroyl phosphate + ADP. Its pathway is carbohydrate degradation; glycolysis; pyruvate from D-glyceraldehyde 3-phosphate: step 2/5. This chain is Phosphoglycerate kinase, found in Xanthomonas campestris pv. campestris (strain 8004).